Here is a 179-residue protein sequence, read N- to C-terminus: Adenine phosphoribosyltransferase (179 aa).

It belongs to the purine/pyrimidine phosphoribosyltransferase family. In terms of assembly, homodimer.

It is found in the cytoplasm. The catalysed reaction is AMP + diphosphate = 5-phospho-alpha-D-ribose 1-diphosphate + adenine. It functions in the pathway purine metabolism; AMP biosynthesis via salvage pathway; AMP from adenine: step 1/1. Functionally, catalyzes a salvage reaction resulting in the formation of AMP, that is energically less costly than de novo synthesis. The sequence is that of Adenine phosphoribosyltransferase from Dinoroseobacter shibae (strain DSM 16493 / NCIMB 14021 / DFL 12).